Consider the following 461-residue polypeptide: Argininosuccinate lyase (461 aa).

This sequence belongs to the lyase 1 family. Argininosuccinate lyase subfamily.

The protein resides in the cytoplasm. The catalysed reaction is 2-(N(omega)-L-arginino)succinate = fumarate + L-arginine. The protein operates within amino-acid biosynthesis; L-arginine biosynthesis; L-arginine from L-ornithine and carbamoyl phosphate: step 3/3. The chain is Argininosuccinate lyase from Laribacter hongkongensis (strain HLHK9).